Here is an 88-residue protein sequence, read N- to C-terminus: Large ribosomal subunit protein bL31B (88 aa).

This sequence belongs to the bacterial ribosomal protein bL31 family. Type B subfamily. In terms of assembly, part of the 50S ribosomal subunit.

This is Large ribosomal subunit protein bL31B from Herminiimonas arsenicoxydans.